The primary structure comprises 267 residues: Orotidine 5'-phosphate decarboxylase (267 aa).

Substrate-binding positions include Asp37, 59–61 (KTH), 91–100 (DRKFADIGNT), Tyr217, and Arg235. The active-site Proton donor is Lys93.

This sequence belongs to the OMP decarboxylase family.

It carries out the reaction orotidine 5'-phosphate + H(+) = UMP + CO2. It functions in the pathway pyrimidine metabolism; UMP biosynthesis via de novo pathway; UMP from orotate: step 2/2. This is Orotidine 5'-phosphate decarboxylase (URA3) from Eremothecium gossypii (strain ATCC 10895 / CBS 109.51 / FGSC 9923 / NRRL Y-1056) (Yeast).